The following is a 349-amino-acid chain: Fructose-1,6-bisphosphatase class 1 (349 aa).

Mg(2+) is bound by residues Glu-92, Asp-113, Leu-115, and Asp-116. Residues 116–119 (DGSS), Asn-209, Tyr-242, and Lys-272 each bind substrate. Residue Glu-278 coordinates Mg(2+).

Belongs to the FBPase class 1 family. As to quaternary structure, homotetramer. Mg(2+) is required as a cofactor.

The protein resides in the cytoplasm. It carries out the reaction beta-D-fructose 1,6-bisphosphate + H2O = beta-D-fructose 6-phosphate + phosphate. It functions in the pathway carbohydrate biosynthesis; Calvin cycle. The chain is Fructose-1,6-bisphosphatase class 1 from Chloroherpeton thalassium (strain ATCC 35110 / GB-78).